The primary structure comprises 248 residues: uncharacterized protein (248 aa).

The N-terminal stretch at 1-23 (MLKKIVIGVTATAAFGIGAGALA) is a signal peptide.

The protein localises to the cell outer membrane. This is an uncharacterized protein from Coxiella burnetii (strain RSA 493 / Nine Mile phase I).